The chain runs to 150 residues: Large ribosomal subunit protein bL9 (150 aa).

Belongs to the bacterial ribosomal protein bL9 family.

In terms of biological role, binds to the 23S rRNA. The protein is Large ribosomal subunit protein bL9 of Leuconostoc mesenteroides subsp. mesenteroides (strain ATCC 8293 / DSM 20343 / BCRC 11652 / CCM 1803 / JCM 6124 / NCDO 523 / NBRC 100496 / NCIMB 8023 / NCTC 12954 / NRRL B-1118 / 37Y).